Consider the following 209-residue polypeptide: MTVLLFGFEPFLEYKENPSQLIVEALNGSTILKEEVKGVILPVEYEKIEDLIVTKIREMKPILTLGIGVAPGRAKITPEKIAINYKYSREGDNAGKKYKGEKIDPLGQDGIFTNIPVEDLVDLLNENGIPAELSLSAGSYLCNNAMYIIIREARKYNSLGGFIHVPLHESYAARIQRPIPSMSLDTMIRGIRLSMEFILTNKKENLTFS.

Catalysis depends on residues Glu-79, Cys-142, and His-164.

It belongs to the peptidase C15 family. As to quaternary structure, homotetramer.

The protein resides in the cytoplasm. It carries out the reaction Release of an N-terminal pyroglutamyl group from a polypeptide, the second amino acid generally not being Pro.. Its function is as follows. Removes 5-oxoproline from various penultimate amino acid residues except L-proline. This chain is Pyrrolidone-carboxylate peptidase, found in Saccharolobus islandicus (strain L.S.2.15 / Lassen #1) (Sulfolobus islandicus).